The chain runs to 218 residues: Adenylate kinase (218 aa).

10–15 (GAGKGT) lines the ATP pocket. The segment at 30-59 (STGDMLRAAVKAGTPLGLEAKKVMDAGGLV) is NMP. Residues Thr31, Arg36, 57–59 (GLV), 85–88 (GFPR), and Gln92 contribute to the AMP site. The interval 122–159 (GRRVHVASGRTYHVKFNPPKVAGKDDETGEDLIQRADD) is LID. ATP is bound by residues Arg123 and 132–133 (TY). Arg156 and Arg167 together coordinate AMP. Gly203 provides a ligand contact to ATP.

It belongs to the adenylate kinase family. As to quaternary structure, monomer.

It localises to the cytoplasm. The catalysed reaction is AMP + ATP = 2 ADP. It functions in the pathway purine metabolism; AMP biosynthesis via salvage pathway; AMP from ADP: step 1/1. In terms of biological role, catalyzes the reversible transfer of the terminal phosphate group between ATP and AMP. Plays an important role in cellular energy homeostasis and in adenine nucleotide metabolism. The chain is Adenylate kinase from Laribacter hongkongensis (strain HLHK9).